The chain runs to 103 residues: UPF0145 protein BCE33L0904 (103 aa).

It belongs to the UPF0145 family.

The sequence is that of UPF0145 protein BCE33L0904 from Bacillus cereus (strain ZK / E33L).